Consider the following 252-residue polypeptide: Ureidoacrylate amidohydrolase RutB (252 aa).

Over residues 1–14 (MSTPARNTTLTSNT) the composition is skewed to polar residues. The tract at residues 1 to 31 (MSTPARNTTLTSNTPAGAPRLPGAPAPQVLP) is disordered. The segment covering 15-27 (PAGAPRLPGAPAP) has biased composition (low complexity). Residue D50 is the Proton acceptor of the active site. The active site involves K159. C192 functions as the Nucleophile in the catalytic mechanism.

The protein belongs to the isochorismatase family. RutB subfamily.

It carries out the reaction (Z)-3-ureidoacrylate + H2O + H(+) = (Z)-3-aminoacrylate + NH4(+) + CO2. The enzyme catalyses (Z)-3-ureidoacrylate + H2O = (Z)-3-aminoacrylate + carbamate + H(+). It catalyses the reaction (Z)-2-methylureidoacrylate + H2O + H(+) = (Z)-2-methylaminoacrylate + NH4(+) + CO2. Hydrolyzes ureidoacrylate to form aminoacrylate and carbamate. The carbamate hydrolyzes spontaneously, thereby releasing one of the nitrogen atoms of the pyrimidine ring as ammonia and one of its carbon atoms as CO2. In Variovorax paradoxus (strain S110), this protein is Ureidoacrylate amidohydrolase RutB.